We begin with the raw amino-acid sequence, 896 residues long: C-type lectin domain-containing protein 180 (896 aa).

An N-terminal signal peptide occupies residues 1 to 18 (MRHLIFTGFVLTLTALEA). The 125-residue stretch at 54–178 (PWGDLYQFRA…CESTSPDHHA (125 aa)) folds into the C-type lectin domain. Asn133 carries an N-linked (GlcNAc...) asparagine glycan. Cys154 and Cys169 are joined by a disulfide. Asn221 and Asn235 each carry an N-linked (GlcNAc...) asparagine glycan. Disordered stretches follow at residues 243 to 264 (STVK…SVSK), 354 to 436 (VKQE…LAPE), 492 to 519 (EKLE…EEQK), and 557 to 809 (KVKA…TTKP). The span at 250 to 260 (SEEETSSEEEE) shows a compositional bias: acidic residues. Composition is skewed to basic and acidic residues over residues 354 to 382 (VKQE…KISE) and 395 to 406 (DMPKADIEPPKE). Acidic residues predominate over residues 407 to 426 (EDCDEEGSGSGSGEEDEKDE). Residues 427 to 436 (SSEKIELAPE) show a composition bias toward basic and acidic residues. 3 stretches are compositionally biased toward basic and acidic residues: residues 575-590 (KSAK…KVGN), 607-663 (QNRE…ETKL), and 683-692 (EEPKSDKDSE). The segment covering 727–739 (STTTESTTVAVKE) has biased composition (low complexity). The span at 740–768 (VPVDEIEKIAKLEAKQHTEDEKVTVETKQ) shows a compositional bias: basic and acidic residues. The span at 773 to 809 (TPAPTTSEKTSTTAAPSTKPAEETTTTTEAPSTTTKP) shows a compositional bias: low complexity.

The protein resides in the secreted. This is C-type lectin domain-containing protein 180 (clec-180) from Caenorhabditis elegans.